Consider the following 209-residue polypeptide: Uridine kinase (209 aa).

12–19 (GGSGSGKT) contributes to the ATP binding site.

The protein belongs to the uridine kinase family.

The protein localises to the cytoplasm. The catalysed reaction is uridine + ATP = UMP + ADP + H(+). It carries out the reaction cytidine + ATP = CMP + ADP + H(+). It participates in pyrimidine metabolism; CTP biosynthesis via salvage pathway; CTP from cytidine: step 1/3. It functions in the pathway pyrimidine metabolism; UMP biosynthesis via salvage pathway; UMP from uridine: step 1/1. The sequence is that of Uridine kinase from Listeria welshimeri serovar 6b (strain ATCC 35897 / DSM 20650 / CCUG 15529 / CIP 8149 / NCTC 11857 / SLCC 5334 / V8).